The chain runs to 131 residues: MQTLAQMDILVVDDDPDTRDLLRFMLEDEGAIVTVAPNAKEALSLLERELPKLLVSDVAMPEMDGFELIGRVRELPKGETLPAIALTAYAREEDRQAALRSGFNDYLTKPVDPLELIRLVQQYCLAFPPDA.

The Response regulatory domain maps to 8–124; that stretch reads DILVVDDDPD…ELIRLVQQYC (117 aa). A 4-aspartylphosphate modification is found at D57.

This is an uncharacterized protein from Leptolyngbya boryana (Plectonema boryanum).